Here is an 810-residue protein sequence, read N- to C-terminus: MAQSLALALDVPETTGDEGLEPSPYEESEVHDSFHQLIQEQSLRVAEEGLELLPLGLGRGDQTLPGLEGAPALSSATLRILASMPSRTIGRSRGAIISQYYNRTVRLRRRSSRPLLGNVVPSARPSLRLYDLELDSTILEEDEKRSLLVKELQGLSAAQRDHMVRNMPLSLGEKRCLREKSWSPKGKRRHLQGRSGAFSCCSRLRYTCMLALHSLGLALLSGLYAARPWRYALKQIGGQFGSSVLSYFLFLKTLLAFNALMLLPLLAFLVGVQAAFPPDPAGPVPTFSGLELLTGGGRFTHTVMYYGYYSNSTLSPSCDAPREGGQCSPRLGSLPYNMPLAYLFTMGATFFLTCIILVYSMSHSFGESYRVGSTKGIHALTVFCSWDYKVTQKRASRVQQDSICTQLKELLAEWHLRKRPRSVCGQLRQVVVLGLGWLLCLGSTMGCTVAVLTFSEVMIQRPASGGQGVEALALPLVVSVLNLGASYLFRGLATLERHDSPVLEVYMAICRNLILKMAVLGVLCYHWLGRRVATLQGQCWEDFVGQELYRFMVVDFIFMLLDSLFGELVWRLISEKKLKRGQKPEFDIARNVLDLIYGQTLTWLGVLFSPLLPAVQILRLLFLFHIKKASLMANCQAPRRPWLASHMSTVFLTLLCFPSFLGAAVFLCYAVWQVRPSSTCGPFRTLNTMYEAGTVWVRRLEHAGSGASWLPWLHHFLVENTFFLFLASALLLAVIYFNIQVVKGQRKVICLLKEQIRNEGEDKIFLINKLHSVYEEEGRSRPGRTQDATEPPAWHEDGGDQKEPCNPRSP.

The disordered stretch occupies residues 1–26 (MAQSLALALDVPETTGDEGLEPSPYE). At 1-205 (MAQSLALALD…GAFSCCSRLR (205 aa)) the chain is on the lumenal side. Residues 15 to 26 (TGDEGLEPSPYE) show a composition bias toward acidic residues. Threonine 88 bears the Phosphothreonine mark. Arginine 93 is modified (omega-N-methylarginine). Asparagine 102 carries N-linked (GlcNAc...) asparagine glycosylation. Threonine 104 carries the phosphothreonine modification. The residue at position 136 (serine 136) is a Phosphoserine. The chain crosses the membrane as a helical span at residues 206-226 (YTCMLALHSLGLALLSGLYAA). The Cytoplasmic segment spans residues 227 to 253 (RPWRYALKQIGGQFGSSVLSYFLFLKT). Residues 254-274 (LLAFNALMLLPLLAFLVGVQA) traverse the membrane as a helical segment. Residues 275 to 338 (AFPPDPAGPV…PRLGSLPYNM (64 aa)) lie on the Lumenal side of the membrane. N-linked (GlcNAc...) asparagine glycosylation is present at asparagine 311. Residues 339–359 (PLAYLFTMGATFFLTCIILVY) form a helical membrane-spanning segment. Over 360–429 (SMSHSFGESY…PRSVCGQLRQ (70 aa)) the chain is Cytoplasmic. A helical membrane pass occupies residues 430-450 (VVVLGLGWLLCLGSTMGCTVA). Residues 451-468 (VLTFSEVMIQRPASGGQG) lie on the Lumenal side of the membrane. The helical transmembrane segment at 469–489 (VEALALPLVVSVLNLGASYLF) threads the bilayer. Over 490-504 (RGLATLERHDSPVLE) the chain is Cytoplasmic. The chain crosses the membrane as a helical span at residues 505–525 (VYMAICRNLILKMAVLGVLCY). The Lumenal segment spans residues 526 to 552 (HWLGRRVATLQGQCWEDFVGQELYRFM). Residues 553–573 (VVDFIFMLLDSLFGELVWRLI) form a helical membrane-spanning segment. The Cytoplasmic segment spans residues 574–603 (SEKKLKRGQKPEFDIARNVLDLIYGQTLTW). The helical transmembrane segment at 604-624 (LGVLFSPLLPAVQILRLLFLF) threads the bilayer. Over 625–649 (HIKKASLMANCQAPRRPWLASHMST) the chain is Lumenal. A helical membrane pass occupies residues 650–670 (VFLTLLCFPSFLGAAVFLCYA). At 671 to 721 (VWQVRPSSTCGPFRTLNTMYEAGTVWVRRLEHAGSGASWLPWLHHFLVENT) the chain is on the cytoplasmic side. The helical transmembrane segment at 722 to 742 (FFLFLASALLLAVIYFNIQVV) threads the bilayer. Residues 743-810 (KGQRKVICLL…QKEPCNPRSP (68 aa)) lie on the Lumenal side of the membrane. The tract at residues 775–810 (EEEGRSRPGRTQDATEPPAWHEDGGDQKEPCNPRSP) is disordered. Residues 793–810 (AWHEDGGDQKEPCNPRSP) show a composition bias toward basic and acidic residues.

This sequence belongs to the TMC family. Interacts with TMC8. Interacts and forms a complex with TMC8 and CIB1; the interaction stabilizes each component of the complex. Interacts and forms a complex with TMC8 and SLC30A1/ZNT1; the interaction regulates zinc transport into the ER. As to expression, widely expressed. Highly expressed in thymus, lung and spleen. Expressed in lymphocytes and peripheral lymphocytes. Expressed in small and medium dorsal root ganglion (DRG) neurons.

It is found in the endoplasmic reticulum membrane. Its function is as follows. Acts as a regulatory protein involved in the regulation of numerous cellular processes. Together with its homolog TMC8/EVER2, forms a complex with calcium-binding protein CIB1 in lymphocytes and keratynocytes where TMC6 and TMC8 stabilize CIB1 and reciprocally. Together with TMC8, also forms a complex with and activates zinc transporter ZNT1 at the ER membrane of keratynocytes, thereby facilitating zinc uptake into the ER. Down-regulates the activity of transcription factors induced by zinc and cytokines. Also plays a role in thermal sensation by inhibiting the M-channel (KCNQ2-KCNQ3 channel) current in primary sensory neurons. The chain is Transmembrane channel-like protein 6 from Mus musculus (Mouse).